A 287-amino-acid polypeptide reads, in one-letter code: Intermediate filament family orphan 2 (287 aa).

The IF rod domain maps to 1–254 (MNLQTMVDTL…RLIKGSADRN (254 aa)). Residues 248–287 (KGSADRNSPSPSSVASSDSGSTDEIQDDLEREADVEPMVS) are disordered. A compositionally biased stretch (low complexity) spans 255–267 (SPSPSSVASSDSG). A compositionally biased stretch (acidic residues) spans 271 to 287 (EIQDDLEREADVEPMVS).

It belongs to the intermediate filament family.

This is Intermediate filament family orphan 2 (Iffo2) from Rattus norvegicus (Rat).